Reading from the N-terminus, the 374-residue chain is tRNA-specific 2-thiouridylase MnmA (374 aa).

ATP is bound by residues 13–20 (GMSGGVDS) and M39. The tract at residues 99 to 101 (NPD) is interaction with target base in tRNA. C104 acts as the Nucleophile in catalysis. C104 and C201 form a disulfide bridge. Position 128 (G128) interacts with ATP. Residues 151–153 (KDQ) are interaction with tRNA. The active-site Cysteine persulfide intermediate is C201. The interaction with tRNA stretch occupies residues 313-314 (RY).

Belongs to the MnmA/TRMU family.

It localises to the cytoplasm. It carries out the reaction S-sulfanyl-L-cysteinyl-[protein] + uridine(34) in tRNA + AH2 + ATP = 2-thiouridine(34) in tRNA + L-cysteinyl-[protein] + A + AMP + diphosphate + H(+). Catalyzes the 2-thiolation of uridine at the wobble position (U34) of tRNA, leading to the formation of s(2)U34. This chain is tRNA-specific 2-thiouridylase MnmA, found in Streptococcus equi subsp. zooepidemicus (strain H70).